Consider the following 504-residue polypeptide: Cholesterol 7-alpha-monooxygenase (504 aa).

C444 is a binding site for heme.

The protein belongs to the cytochrome P450 family. Heme is required as a cofactor.

The protein localises to the endoplasmic reticulum membrane. It is found in the microsome membrane. The enzyme catalyses cholesterol + reduced [NADPH--hemoprotein reductase] + O2 = 7alpha-hydroxycholesterol + oxidized [NADPH--hemoprotein reductase] + H2O + H(+). It functions in the pathway lipid metabolism; bile acid biosynthesis. In terms of biological role, catalyzes a rate-limiting step in cholesterol catabolism and bile acid biosynthesis by introducing a hydrophilic moiety at position 7 of cholesterol. Important for cholesterol homeostasis. This is Cholesterol 7-alpha-monooxygenase (CYP7A1) from Cricetulus griseus (Chinese hamster).